The sequence spans 642 residues: Bud site selection protein 5 (642 aa).

Positions 224-339 (EVFRIQLYLN…DIVQLFINKK (116 aa)) constitute an N-terminal Ras-GEF domain. The region spanning 412 to 640 (SPWSLAKTLT…YQVSIAKVPR (229 aa)) is the Ras-GEF domain.

Interacts with AXL2, BEM1, GSP1 and in haploid cells with AXL1.

The protein resides in the bud neck. Its subcellular location is the cytoplasm. It is found in the cell cortex. Functionally, GDP-GTP exchange factor (GEF) for the small GTPase BUD1/RSR1. Regulates the activity of BUD1 together with BUD2 which is a GTPase-activating protein (GAP) of BUD1. Required to produce both the axial and bipolar patterns of bud site selection. Determines the orientation of division axis. Overexpression can suppress mutations in PRP20 which is the GEF for GSP1. May be a cytoplasmic GEF for GSP1. Might also act on the Ras-like protein CDC42. Appears to bind to Ras proteins but not to activate them. The chain is Bud site selection protein 5 (BUD5) from Saccharomyces cerevisiae (strain ATCC 204508 / S288c) (Baker's yeast).